Consider the following 1690-residue polypeptide: Restin homolog (1690 aa).

2 stretches are compositionally biased toward polar residues: residues 1-11 and 39-51; these read MSDDTSASGGT and NIPTPATSGTGIP. The tract at residues 1–105 is disordered; the sequence is MSDDTSASGG…ESDDNLSSIN (105 aa). S64 and S67 each carry phosphoserine. The region spanning 143-185 is the CAP-Gly 1 domain; sequence GDTHFAAGEWAGVVLDEPNGKNDGCVSGKRYFQCEPKRGIFSR. The segment at 195 to 227 is disordered; sequence AGAQTPTSPLAKSSPDRSRTVSPTASIRSSMLR. A compositionally biased stretch (polar residues) spans 214 to 226; it reads TVSPTASIRSSML. S216 bears the Phosphoserine mark. The CAP-Gly 2 domain maps to 260–302; sequence GETQFAPGNWCGVELDEPSGKNDGTVDDIRYFECKPKYGVFVP. Phosphoserine occurs at positions 309, 322, and 325. The residue at position 327 (T327) is a Phosphothreonine. Phosphoserine is present on S328. T362 carries the phosphothreonine modification. 7 coiled-coil regions span residues 378 to 468, 484 to 660, 667 to 916, 926 to 981, 1001 to 1121, 1158 to 1549, and 1565 to 1600; these read QHVE…VSAT, GALQ…DMLR, EEKS…TKLK, LSSC…ELQA, ATGH…EAIQ, EADM…AQMN, and DIETSLAKINFLNSIIADMQQKNDALKAKVQTLETL. A disordered region spans residues 843–905; it reads QQAAASGEEG…GSLEEEAKKS (63 aa). The span at 865–885 shows a compositional bias: polar residues; that stretch reads QLKSQAEETQSELKSTQSNLE. 2 disordered regions span residues 1031-1052 and 1400-1419; these read QLQDSQDSQTKLKAEGERKEKS and KLDESNTVLESQKKSHNEIQ. Composition is skewed to basic and acidic residues over residues 1040 to 1052 and 1410 to 1419; these read TKLKAEGERKEKS and SQKKSHNEIQ. The disordered stretch occupies residues 1635-1665; the sequence is TEDCPIQGSEDQDYSTPSSESNNNEKERKLP. T1681 bears the Phosphothreonine mark. S1682 bears the Phosphoserine mark.

Interacts with Lva. Specifically expressed at the tip of the furrow in cellularizing blastoderms. CLIP-190 and jar are coexpressed at several times in development and in a number of tissues, including embryonic axonal neuron processes and posterior pole.

The protein resides in the cytoplasm. It localises to the cytoskeleton. The protein localises to the golgi apparatus. Its subcellular location is the microtubule organizing center. It is found in the perinuclear region. Functionally, together CLIP-190 and jar may coordinate the interaction between the actin and microtubule cytoskeleton. May link endocytic vesicles to microtubules. May play a role in formation of furrows during cellularization. In Drosophila melanogaster (Fruit fly), this protein is Restin homolog (CLIP-190).